A 404-amino-acid chain; its full sequence is Nuclear receptor subfamily 2 group F member 6 (404 aa).

The segment covering 1 to 15 (MAMVTGGWGGPGGDT) has biased composition (gly residues). The interval 1–49 (MAMVTGGWGGPGGDTNGVDKAGGYPRAAEDDSASPPGAASDAEPGDEER) is disordered. A compositionally biased stretch (low complexity) spans 33–42 (ASPPGAASDA). Phosphoserine is present on residues Ser34 and Ser40. The nuclear receptor DNA-binding region spans 53-128 (QVDCVVCGDK…VGMRKEAVQR (76 aa)). The NR C4-type zinc finger occupies 56-76 (CVVCGDKSSGKHYGVFTCEGC). Ser83 carries the post-translational modification Phosphoserine. The NR C4-type zinc finger occupies 92-116 (CRSNRDCQIDQHHRNQCQYCRLKKC). An NR LBD domain is found at 165-393 (PVSELIAQLL…TLIRDMLLSG (229 aa)). Positions 327–404 (LQEKAQVALT…TFNWPYGSGQ (78 aa)) are important for dimerization.

Belongs to the nuclear hormone receptor family. NR2 subfamily. In terms of assembly, binds DNA as dimer; homodimer and heterodimer with NR2F2 and probably NR2F1. Interacts with THRB. In terms of tissue distribution, expressed in heart, placenta, liver, skeletal muscle, kidney and pancreas.

The protein localises to the nucleus. Transcription factor predominantly involved in transcriptional repression. Binds to promoter/enhancer response elements that contain the imperfect 5'-AGGTCA-3' direct or inverted repeats with various spacings which are also recognized by other nuclear hormone receptors. Involved in modulation of hormonal responses. Represses transcriptional activity of the lutropin-choriogonadotropic hormone receptor/LHCGR gene, the renin/REN gene and the oxytocin-neurophysin/OXT gene. Represses the triiodothyronine-dependent and -independent transcriptional activity of the thyroid hormone receptor gene in a cell type-specific manner. The corepressing function towards thyroid hormone receptor beta/THRB involves at least in part the inhibition of THRB binding to triiodothyronine response elements (TREs) by NR2F6. Inhibits NFATC transcription factor DNA binding and subsequently its transcriptional activity. Acts as transcriptional repressor of IL-17 expression in Th-17 differentiated CD4(+) T cells and may be involved in induction and/or maintenance of peripheral immunological tolerance and autoimmunity. Involved in development of forebrain circadian clock; is required early in the development of the locus coeruleus (LC). In Homo sapiens (Human), this protein is Nuclear receptor subfamily 2 group F member 6 (NR2F6).